We begin with the raw amino-acid sequence, 110 residues long: MNKNNVIDSLFNIIEDRKDKPIEGSYTGYLFEKGLDKILKKVGEESSEVIIAAKNEDEEELIKEICDLTYHIMVLMVEKQIKLDGIEKELEKRREKICNKKNERKTIEKL.

It belongs to the PRA-PH family.

It localises to the cytoplasm. It carries out the reaction 1-(5-phospho-beta-D-ribosyl)-ATP + H2O = 1-(5-phospho-beta-D-ribosyl)-5'-AMP + diphosphate + H(+). The protein operates within amino-acid biosynthesis; L-histidine biosynthesis; L-histidine from 5-phospho-alpha-D-ribose 1-diphosphate: step 2/9. In Clostridium botulinum (strain Kyoto / Type A2), this protein is Phosphoribosyl-ATP pyrophosphatase.